Consider the following 117-residue polypeptide: Large ribosomal subunit protein bL20 (117 aa).

It belongs to the bacterial ribosomal protein bL20 family.

Binds directly to 23S ribosomal RNA and is necessary for the in vitro assembly process of the 50S ribosomal subunit. It is not involved in the protein synthesizing functions of that subunit. The sequence is that of Large ribosomal subunit protein bL20 from Actinobacillus pleuropneumoniae serotype 7 (strain AP76).